Here is a 142-residue protein sequence, read N- to C-terminus: Small ribosomal subunit protein uS9 (142 aa).

It belongs to the universal ribosomal protein uS9 family.

The chain is Small ribosomal subunit protein uS9 (RPS16) from Debaryomyces hansenii (strain ATCC 36239 / CBS 767 / BCRC 21394 / JCM 1990 / NBRC 0083 / IGC 2968) (Yeast).